The following is a 358-amino-acid chain: MASVSLRKLDKSYGALRIVKGIDLEINDGEFVVFVGPSGCGKSTTLRMVAGLESITGGEVKIGDRVVNQLPPRERDIAMVFQDYALYPHKTVRENMGFSLKVRGVSASQANASIDEAAKMLGIEHLLDRRPGQLSGGQRQRVAMGRAIVRRPQVFLFDEPLSNLDAKLRGQVRTEIKRLHQQLGTTIIYVTHDQVEAMTLADRIVILRGGDIEQVGTPDEVYNRPESVFVGGFVGAPAMNFARARVNGDRLAFSDGNSLPMAAIRPSRETGLEGRDVIVGIRPEHFGPAEGFDSQLAVSVQVVEPLGSDTLVHFSLGDAALTARMPPQLRPTPNEELRIGVDPSKVHLFDATTERSIH.

An ABC transporter domain is found at 4–234 (VSLRKLDKSY…PESVFVGGFV (231 aa)). Residue 36–43 (GPSGCGKS) coordinates ATP.

The protein belongs to the ABC transporter superfamily. In terms of assembly, the complex is probably composed of two ATP-binding proteins (SmoE), two transmembrane proteins (SmoG and SmoH) and a solute-binding protein (SmoF).

It localises to the cell inner membrane. Part of the ABC transporter complex SmoEFGH involved in sulfoquinovosyl glycerol (SQGro) uptake. Responsible for energy coupling to the transport system. In Agrobacterium fabrum (strain C58 / ATCC 33970) (Agrobacterium tumefaciens (strain C58)), this protein is Sulfoquinovosyl glycerol transport ATP-binding protein SmoE.